Consider the following 509-residue polypeptide: Probable cytochrome P450 4ac3 (509 aa).

C454 lines the heme pocket.

Belongs to the cytochrome P450 family. The cofactor is heme.

It localises to the endoplasmic reticulum membrane. The protein resides in the microsome membrane. Its function is as follows. May be involved in the metabolism of insect hormones and in the breakdown of synthetic insecticides. The protein is Probable cytochrome P450 4ac3 (Cyp4ac3) of Drosophila melanogaster (Fruit fly).